The chain runs to 163 residues: Leptin (163 aa).

The N-terminal stretch at 1–18 (MCWRPLCRLWSYLVYVQA) is a signal peptide. An intrachain disulfide couples cysteine 113 to cysteine 163.

This sequence belongs to the leptin family. Not exclusively localized in adipose tissue but is also expressed in liver.

It localises to the secreted. Functionally, key player in the regulation of energy balance and body weight control. Once released into the circulation, has central and peripheral effects by binding LEPR, found in many tissues, which results in the activation of several major signaling pathways. The protein is Leptin (LEP) of Gallus gallus (Chicken).